Consider the following 975-residue polypeptide: Kinesin-like protein KIN-14K (975 aa).

The tract at residues 1–40 (MKNRIKKGSSMIGVYGRSDGSSSIQSSNGSESRESIDDNK) is disordered. A compositionally biased stretch (low complexity) spans 17-30 (RSDGSSSIQSSNGS). Basic and acidic residues predominate over residues 31–40 (ESRESIDDNK). Residues 40–143 (KQGHQSLVEW…SLKALKASFS (104 aa)) form the Calponin-homology (CH) domain. A coiled-coil region spans residues 289–345 (KERSNAELSKLKQELEIVKETHEKQFLELKLNAQKAKVELERQVKNSELRVVEAKEL). The Kinesin motor domain maps to 436-746 (NIRVYCRIRP…LKFAERVSGV (311 aa)). 520–527 (GQTGSGKT) is a binding site for ATP. A coiled-coil region spans residues 757 to 788 (GRDVRQLMEQVSNLKDMIAKKDEELQKFQNIN). 2 disordered regions span residues 801-852 (VSPP…GAKD) and 900-975 (LFPE…NRKR). Over residues 944–958 (LSISTTSSKALTSSK) the composition is skewed to low complexity.

Belongs to the TRAFAC class myosin-kinesin ATPase superfamily. Kinesin family. KIN-14 subfamily.

This chain is Kinesin-like protein KIN-14K, found in Arabidopsis thaliana (Mouse-ear cress).